Reading from the N-terminus, the 37-residue chain is Photosystem I reaction center subunit VIII (37 aa).

A helical transmembrane segment spans residues 7-27; that stretch reads LPSIFVPLVGLVFPAIAMASL.

This sequence belongs to the PsaI family.

Its subcellular location is the plastid. The protein resides in the chloroplast thylakoid membrane. Its function is as follows. May help in the organization of the PsaL subunit. This Populus alba (White poplar) protein is Photosystem I reaction center subunit VIII.